The sequence spans 834 residues: Periplasmic nitrate reductase (834 aa).

The segment at residues M1–A29 is a signal peptide (tat-type signal). The region spanning L41–D97 is the 4Fe-4S Mo/W bis-MGD-type domain. The [4Fe-4S] cluster site is built by C48, C51, C55, and C83. Residues K85, Q152, N177, C181, W214–M221, S245–H249, Q264–D266, M375, Q379, N485, S511–D512, K534, D561, and T721–T730 contribute to the Mo-bis(molybdopterin guanine dinucleotide) site. F797 is a substrate binding site. Mo-bis(molybdopterin guanine dinucleotide) contacts are provided by N805 and K822.

Belongs to the prokaryotic molybdopterin-containing oxidoreductase family. NasA/NapA/NarB subfamily. In terms of assembly, component of the periplasmic nitrate reductase NapAB complex composed of NapA and NapB. It depends on [4Fe-4S] cluster as a cofactor. The cofactor is Mo-bis(molybdopterin guanine dinucleotide). Predicted to be exported by the Tat system. The position of the signal peptide cleavage has not been experimentally proven.

It is found in the periplasm. The enzyme catalyses 2 Fe(II)-[cytochrome] + nitrate + 2 H(+) = 2 Fe(III)-[cytochrome] + nitrite + H2O. Functionally, catalytic subunit of the periplasmic nitrate reductase complex NapAB. Receives electrons from NapB and catalyzes the reduction of nitrate to nitrite. This Pseudomonas aeruginosa (strain LESB58) protein is Periplasmic nitrate reductase.